Reading from the N-terminus, the 191-residue chain is Zinc finger protein GIS2 (191 aa).

Residues 55 to 77 form a C2H2-type zinc finger; it reads FKCHYCFRNFPTSQALGGHQNAH.

In terms of tissue distribution, expressed in inflorescence meristems, floral meristems and stem epidermis.

The protein localises to the nucleus. Its function is as follows. Probable transcription factor required for the initiation of inflorescence trichomes in response to gibberellin and cytokinin. Is not involved in the regulation of trichome branching. Is functionally equivalent to ZFP8. The polypeptide is Zinc finger protein GIS2 (GIS2) (Arabidopsis thaliana (Mouse-ear cress)).